The following is a 639-amino-acid chain: Chaperone protein DnaK (639 aa).

Thr-198 carries the phosphothreonine; by autocatalysis modification. Residues 602-639 form a disordered region; it reads QAKSQAQGGDNADAGKQANATADDVVDAEFEEVKDDKK. Residues 625-639 are compositionally biased toward acidic residues; it reads DVVDAEFEEVKDDKK.

Belongs to the heat shock protein 70 family.

Its function is as follows. Acts as a chaperone. The sequence is that of Chaperone protein DnaK from Shewanella baltica (strain OS155 / ATCC BAA-1091).